We begin with the raw amino-acid sequence, 72 residues long: Translation initiation factor IF-1 (72 aa).

In terms of domain architecture, S1-like spans 1 to 72 (MAKDDVIEIE…TKGRITYRFK (72 aa)).

This sequence belongs to the IF-1 family. As to quaternary structure, component of the 30S ribosomal translation pre-initiation complex which assembles on the 30S ribosome in the order IF-2 and IF-3, IF-1 and N-formylmethionyl-tRNA(fMet); mRNA recruitment can occur at any time during PIC assembly.

The protein localises to the cytoplasm. Its function is as follows. One of the essential components for the initiation of protein synthesis. Stabilizes the binding of IF-2 and IF-3 on the 30S subunit to which N-formylmethionyl-tRNA(fMet) subsequently binds. Helps modulate mRNA selection, yielding the 30S pre-initiation complex (PIC). Upon addition of the 50S ribosomal subunit IF-1, IF-2 and IF-3 are released leaving the mature 70S translation initiation complex. This chain is Translation initiation factor IF-1, found in Ligilactobacillus salivarius (strain UCC118) (Lactobacillus salivarius).